The sequence spans 664 residues: DNA ligase (664 aa).

NAD(+) is bound by residues 32-36 (DKDYD) and 80-81 (SL). Residue lysine 122 is the N6-AMP-lysine intermediate of the active site. 3 residues coordinate NAD(+): arginine 144, glutamate 178, and lysine 314. Positions 407, 410, 423, and 429 each coordinate Zn(2+). The BRCT domain maps to 587–664 (IKENIFNGKT…SEEDFKNMIG (78 aa)).

The protein belongs to the NAD-dependent DNA ligase family. LigA subfamily. Requires Mg(2+) as cofactor. The cofactor is Mn(2+).

It carries out the reaction NAD(+) + (deoxyribonucleotide)n-3'-hydroxyl + 5'-phospho-(deoxyribonucleotide)m = (deoxyribonucleotide)n+m + AMP + beta-nicotinamide D-nucleotide.. Its function is as follows. DNA ligase that catalyzes the formation of phosphodiester linkages between 5'-phosphoryl and 3'-hydroxyl groups in double-stranded DNA using NAD as a coenzyme and as the energy source for the reaction. It is essential for DNA replication and repair of damaged DNA. The chain is DNA ligase from Clostridium novyi (strain NT).